The chain runs to 205 residues: Probable GTP-binding protein EngB (205 aa).

One can recognise an EngB-type G domain in the interval 27-201 (SGIEIAFAGR…AAKLDSWFAP (175 aa)). GTP contacts are provided by residues 35 to 42 (GRSNAGKS), 62 to 66 (GRTQL), 80 to 83 (DLPG), 147 to 150 (TKAD), and 180 to 182 (FSA). Residues serine 42 and threonine 64 each coordinate Mg(2+).

It belongs to the TRAFAC class TrmE-Era-EngA-EngB-Septin-like GTPase superfamily. EngB GTPase family. Requires Mg(2+) as cofactor.

Necessary for normal cell division and for the maintenance of normal septation. The protein is Probable GTP-binding protein EngB of Pasteurella multocida (strain Pm70).